The following is a 430-amino-acid chain: Enolase (430 aa).

The interval 1-140 is sufficient for secretion; that stretch reads MPYIVDVYAR…YQYLGGFNSK (140 aa). Phosphothreonine is present on T141. Q163 is a (2R)-2-phosphoglycerate binding site. The active-site Proton donor is E205. Residue D242 participates in Mg(2+) binding. S259 is subject to Phosphoserine. A Phosphotyrosine modification is found at Y281. Mg(2+)-binding residues include E287 and D314. S325 bears the Phosphoserine mark. (2R)-2-phosphoglycerate-binding residues include K339, R368, S369, and K390. K339 acts as the Proton acceptor in catalysis.

The protein belongs to the enolase family. As to quaternary structure, homooctamer. Component of the RNA degradosome complex composed of rny, rnjA, rnjB, pnp, pfkA and eno (although rnjA and rnjB's presence is controversial). Mg(2+) serves as cofactor. Phosphorylated during sporulation.

It localises to the cytoplasm. The protein localises to the secreted. The protein resides in the cell surface. The enzyme catalyses (2R)-2-phosphoglycerate = phosphoenolpyruvate + H2O. The protein operates within carbohydrate degradation; glycolysis; pyruvate from D-glyceraldehyde 3-phosphate: step 4/5. With respect to regulation, covalent binding to the substrate (probably 2-PG) at Lys-339 of a small fraction of enolase causes inactivation of the enzyme, and possibly serves as a signal for the export of the protein. Citrate acts as a non-competitive inhibitor for both forward and reverse reactions, probably by chelating Mg(2+). Its function is as follows. Catalyzes the reversible conversion of 2-phosphoglycerate (2-PG) into phosphoenolpyruvate (PEP). It is essential for the degradation of carbohydrates via glycolysis. In terms of biological role, a component of the RNA degradosome, a multi-enzyme complex involved in RNA processing and messenger RNA degradation. In Bacillus subtilis (strain 168), this protein is Enolase.